The sequence spans 161 residues: Probable chemoreceptor glutamine deamidase CheD (161 aa).

Belongs to the CheD family.

It carries out the reaction L-glutaminyl-[protein] + H2O = L-glutamyl-[protein] + NH4(+). Probably deamidates glutamine residues to glutamate on methyl-accepting chemotaxis receptors (MCPs), playing an important role in chemotaxis. In Trichlorobacter lovleyi (strain ATCC BAA-1151 / DSM 17278 / SZ) (Geobacter lovleyi), this protein is Probable chemoreceptor glutamine deamidase CheD.